A 456-amino-acid polypeptide reads, in one-letter code: 3-isopropylmalate dehydratase large subunit (456 aa).

[4Fe-4S] cluster contacts are provided by Cys336, Cys396, and Cys399.

The protein belongs to the aconitase/IPM isomerase family. LeuC type 1 subfamily. Heterodimer of LeuC and LeuD. [4Fe-4S] cluster serves as cofactor.

The enzyme catalyses (2R,3S)-3-isopropylmalate = (2S)-2-isopropylmalate. Its pathway is amino-acid biosynthesis; L-leucine biosynthesis; L-leucine from 3-methyl-2-oxobutanoate: step 2/4. In terms of biological role, catalyzes the isomerization between 2-isopropylmalate and 3-isopropylmalate, via the formation of 2-isopropylmaleate. In Staphylococcus aureus (strain MW2), this protein is 3-isopropylmalate dehydratase large subunit.